Consider the following 948-residue polypeptide: UvrABC system protein A (948 aa).

Position 31–38 (31–38) interacts with ATP; the sequence is GLSGSGKS. The C4-type zinc-finger motif lies at 249 to 277; it reads CPNGHDIGFTELSPRMFSFNSPYGACETC. 2 consecutive ABC transporter domains span residues 307 to 586 and 606 to 934; these read WAGS…KNSL and GNGS…QYLK. 638-645 is an ATP binding site; the sequence is GVSGSGKS. The segment at 737-763 adopts a C4-type zinc-finger fold; sequence CETCEGDGILKIEMHFLPDVYVTCEVC.

Belongs to the ABC transporter superfamily. UvrA family. Forms a heterotetramer with UvrB during the search for lesions.

The protein resides in the cytoplasm. Its function is as follows. The UvrABC repair system catalyzes the recognition and processing of DNA lesions. UvrA is an ATPase and a DNA-binding protein. A damage recognition complex composed of 2 UvrA and 2 UvrB subunits scans DNA for abnormalities. When the presence of a lesion has been verified by UvrB, the UvrA molecules dissociate. The sequence is that of UvrABC system protein A from Leptospira interrogans serogroup Icterohaemorrhagiae serovar copenhageni (strain Fiocruz L1-130).